Consider the following 294-residue polypeptide: Pyridoxal 5'-phosphate synthase subunit PdxS (294 aa).

Asp-24 contacts D-ribose 5-phosphate. The active-site Schiff-base intermediate with D-ribose 5-phosphate is Lys-81. Gly-153 contributes to the D-ribose 5-phosphate binding site. Arg-165 is a D-glyceraldehyde 3-phosphate binding site. D-ribose 5-phosphate-binding positions include Gly-214 and 235 to 236; that span reads GS.

This sequence belongs to the PdxS/SNZ family. In the presence of PdxT, forms a dodecamer of heterodimers.

The enzyme catalyses aldehydo-D-ribose 5-phosphate + D-glyceraldehyde 3-phosphate + L-glutamine = pyridoxal 5'-phosphate + L-glutamate + phosphate + 3 H2O + H(+). Its pathway is cofactor biosynthesis; pyridoxal 5'-phosphate biosynthesis. Catalyzes the formation of pyridoxal 5'-phosphate from ribose 5-phosphate (RBP), glyceraldehyde 3-phosphate (G3P) and ammonia. The ammonia is provided by the PdxT subunit. Can also use ribulose 5-phosphate and dihydroxyacetone phosphate as substrates, resulting from enzyme-catalyzed isomerization of RBP and G3P, respectively. This is Pyridoxal 5'-phosphate synthase subunit PdxS from Bacillus licheniformis (strain ATCC 14580 / DSM 13 / JCM 2505 / CCUG 7422 / NBRC 12200 / NCIMB 9375 / NCTC 10341 / NRRL NRS-1264 / Gibson 46).